The primary structure comprises 253 residues: 28 kDa inner dynein arm light chain, axonemal (253 aa).

Residues 19 to 44 form a disordered region; that stretch reads TSKDKGKGAKGTPGKKGALPPVEQKP. The stretch at 160 to 239 forms a coiled coil; the sequence is IRKALQTEQG…LKQQLETFLV (80 aa).

It belongs to the inner dynein arm light chain family.

The protein localises to the cytoplasm. The protein resides in the cytoskeleton. It localises to the flagellum axoneme. Functionally, plays a dynamic role in flagellar motility. May be necessary for stable assembly of a subset of inner dynein arms or for the binding of these arms to the outer doublet microtubules of the axoneme. In Chlamydomonas reinhardtii (Chlamydomonas smithii), this protein is 28 kDa inner dynein arm light chain, axonemal (IDA4).